Consider the following 343-residue polypeptide: UDP-3-O-acylglucosamine N-acyltransferase (343 aa).

The active-site Proton acceptor is the H239.

The protein belongs to the transferase hexapeptide repeat family. LpxD subfamily. Homotrimer.

The catalysed reaction is a UDP-3-O-[(3R)-3-hydroxyacyl]-alpha-D-glucosamine + a (3R)-hydroxyacyl-[ACP] = a UDP-2-N,3-O-bis[(3R)-3-hydroxyacyl]-alpha-D-glucosamine + holo-[ACP] + H(+). The protein operates within bacterial outer membrane biogenesis; LPS lipid A biosynthesis. In terms of biological role, catalyzes the N-acylation of UDP-3-O-acylglucosamine using 3-hydroxyacyl-ACP as the acyl donor. Is involved in the biosynthesis of lipid A, a phosphorylated glycolipid that anchors the lipopolysaccharide to the outer membrane of the cell. This Vibrio parahaemolyticus serotype O3:K6 (strain RIMD 2210633) protein is UDP-3-O-acylglucosamine N-acyltransferase.